The chain runs to 493 residues: Cysteine sulfinic acid decarboxylase (493 aa).

N6-(pyridoxal phosphate)lysine is present on Lys305.

The protein belongs to the group II decarboxylase family. In terms of assembly, homodimer. Pyridoxal 5'-phosphate is required as a cofactor. As to expression, expressed in kidney and liver not detected in lymphoid tissues and lung. Expressed in kidney, liver and brain. 7 and 4 times higher expression in kidney and liver than in brain, respectively. Low level of detection in skeletal muscle. Expressed in brain, olfactory bulb, liver, skeletal muscle and kidney with the highest expression in liver and lowest in skeletal muscle (at protein level).

The enzyme catalyses L-aspartate + H(+) = beta-alanine + CO2. The catalysed reaction is 3-sulfino-L-alanine + H(+) = hypotaurine + CO2. It carries out the reaction L-cysteate + H(+) = taurine + CO2. It participates in organosulfur biosynthesis; taurine biosynthesis; hypotaurine from L-cysteine: step 2/2. Its activity is regulated as follows. Activated by Mn(2+). Inhibited by bis-carboxymethyl-trithiocarbonate, ethylxanthogenacetic acid and 2,5-disulfoaniline. Not affected by Li(+) within 0.05-40 mM concentration range. Functionally, catalyzes the decarboxylation of L-aspartate, 3-sulfino-L-alanine (cysteine sulfinic acid), and L-cysteate to beta-alanine, hypotaurine and taurine, respectively. The preferred substrate is 3-sulfino-L-alanine. Does not exhibit any decarboxylation activity toward glutamate. The chain is Cysteine sulfinic acid decarboxylase from Mus musculus (Mouse).